The primary structure comprises 612 residues: Zinc metalloproteinase-disintegrin-like 8 (612 aa).

A signal peptide spans 1–20; that stretch reads MIQVLLVTICLAVFPYQGSS. Positions 21–189 are excised as a propeptide; that stretch reads IILGSGNVND…KKASQLNLTP (169 aa). Positions 199–395 constitute a Peptidase M12B domain; sequence KYIELVIVAD…NRPPCILNKP (197 aa). E202 contacts Ca(2+). N218 carries N-linked (GlcNAc...) asparagine glycosylation. D286 serves as a coordination point for Ca(2+). 3 disulfide bridges follow: C310–C390, C350–C374, and C352–C357. Position 335 (H335) interacts with Zn(2+). The active site involves E336. Residues H339 and H345 each contribute to the Zn(2+) site. 8 residues coordinate Ca(2+): C390, N393, V405, N408, F410, E412, E415, and D418. Residues 403–489 form the Disintegrin domain; sequence PPVCGNYFVE…DCPTDDFQRN (87 aa). Intrachain disulfides connect C406–C435, C417–C430, C419–C425, C429–C452, C443–C449, C448–C474, C461–C481, C468–C500, C493–C505, C512–C562, C527–C573, C540–C550, C557–C599, and C593–C605. Residues 467–469 carry the D/ECD-tripeptide motif; sequence ECD. N502 carries an N-linked (GlcNAc...) asparagine glycan.

Belongs to the venom metalloproteinase (M12B) family. P-III subfamily. Zn(2+) is required as a cofactor. Expressed by the venom gland.

It localises to the secreted. Snake venom metalloproteinase that impairs hemostasis in the envenomed animal. The protein is Zinc metalloproteinase-disintegrin-like 8 of Crotalus adamanteus (Eastern diamondback rattlesnake).